The sequence spans 371 residues: Opine oxidase subunit B (371 aa).

In terms of assembly, heterodimer of a subunit A and a subunit B.

Its pathway is opine metabolism; octopine degradation. Oxidative cleavage of octopine into L-arginine and pyruvate. This chain is Opine oxidase subunit B (ooxB), found in Agrobacterium tumefaciens (strain Ach5).